The sequence spans 970 residues: Isoleucine--tRNA ligase (970 aa).

A 'HIGH' region motif is present at residues 65–75 (PYANGHLHIGH). Glu-608 is an L-isoleucyl-5'-AMP binding site. A 'KMSKS' region motif is present at residues 649–653 (KMSKS). Lys-652 is an ATP binding site. Zn(2+) is bound by residues Cys-943, Cys-946, Cys-962, and Cys-965.

This sequence belongs to the class-I aminoacyl-tRNA synthetase family. IleS type 1 subfamily. As to quaternary structure, monomer. Zn(2+) serves as cofactor.

It is found in the cytoplasm. It catalyses the reaction tRNA(Ile) + L-isoleucine + ATP = L-isoleucyl-tRNA(Ile) + AMP + diphosphate. Its function is as follows. Catalyzes the attachment of isoleucine to tRNA(Ile). As IleRS can inadvertently accommodate and process structurally similar amino acids such as valine, to avoid such errors it has two additional distinct tRNA(Ile)-dependent editing activities. One activity is designated as 'pretransfer' editing and involves the hydrolysis of activated Val-AMP. The other activity is designated 'posttransfer' editing and involves deacylation of mischarged Val-tRNA(Ile). In Ruegeria pomeroyi (strain ATCC 700808 / DSM 15171 / DSS-3) (Silicibacter pomeroyi), this protein is Isoleucine--tRNA ligase.